A 552-amino-acid polypeptide reads, in one-letter code: Lysine--tRNA ligase (552 aa).

The 'HIGH' region motif lies at 71–79 (PSGLPHLGT). The 'KMSKS' region motif lies at 319–323 (KISKS). K322 serves as a coordination point for ATP.

This sequence belongs to the class-I aminoacyl-tRNA synthetase family.

Its subcellular location is the cytoplasm. The enzyme catalyses tRNA(Lys) + L-lysine + ATP = L-lysyl-tRNA(Lys) + AMP + diphosphate. This chain is Lysine--tRNA ligase, found in Caulobacter sp. (strain K31).